Consider the following 313-residue polypeptide: Leucine-rich repeat-containing protein 52 (313 aa).

A signal peptide spans M1–G23. Positions S24 to L53 constitute an LRRNT domain. Topologically, residues S24–D244 are extracellular. 2 disulfide bridges follow: C26–C32 and C30–C39. 5 LRR repeats span residues N54–L75, D78–G99, K102–V123, N126–N148, and S151–H172. 2 N-linked (GlcNAc...) asparagine glycosylation sites follow: N112 and N148. The LRRCT domain maps to N184–T238. Cystine bridges form between C188/C214 and C190/C236. Residues N189 and N211 are each glycosylated (N-linked (GlcNAc...) asparagine). Residues Y245–L265 traverse the membrane as a helical segment. The Cytoplasmic portion of the chain corresponds to T266–I313.

May interact with KCNU1; this interaction may be required for LRRC52 stability and may change the channel gating properties. Interacts with KCNMA1. Post-translationally, N-glycosylated. Mainly expressed in testis and skeletal muscle.

Its subcellular location is the cell membrane. In terms of biological role, auxiliary protein of the large-conductance, voltage and calcium-activated potassium channel (BK alpha). Modulates gating properties by producing a marked shift in the BK channel's voltage dependence of activation in the hyperpolarizing direction, and in the absence of calcium. KCNU1 channel auxiliary protein. Modulates KCNU1 gating properties. This chain is Leucine-rich repeat-containing protein 52 (LRRC52), found in Homo sapiens (Human).